Consider the following 166-residue polypeptide: Ubiquitin-conjugating enzyme E2 7 (166 aa).

An N-acetylalanine modification is found at Ala-2. One can recognise a UBC core domain in the interval 4-164 (QASLLLQKQL…VSRCVRKSQE (161 aa)). Residue Cys-89 is the Glycyl thioester intermediate of the active site.

It belongs to the ubiquitin-conjugating enzyme family.

It carries out the reaction S-ubiquitinyl-[E1 ubiquitin-activating enzyme]-L-cysteine + [E2 ubiquitin-conjugating enzyme]-L-cysteine = [E1 ubiquitin-activating enzyme]-L-cysteine + S-ubiquitinyl-[E2 ubiquitin-conjugating enzyme]-L-cysteine.. It functions in the pathway protein modification; protein ubiquitination. Functionally, accepts the ubiquitin from the E1 complex and catalyzes its covalent attachment to other proteins. Involved in the formation of multiubiquitin chains. Signal the protein for selective degradation. In Arabidopsis thaliana (Mouse-ear cress), this protein is Ubiquitin-conjugating enzyme E2 7 (UBC7).